The sequence spans 450 residues: Deoxyguanosinetriphosphate triphosphohydrolase-like protein (450 aa).

An HD domain is found at 61 to 274 (RLTHSLEVAQ…MELADDIAYA (214 aa)).

The protein belongs to the dGTPase family. Type 2 subfamily.

The chain is Deoxyguanosinetriphosphate triphosphohydrolase-like protein from Histophilus somni (strain 2336) (Haemophilus somnus).